The following is a 160-amino-acid chain: Ribosomal RNA large subunit methyltransferase H (160 aa).

Positions 76 and 108 each coordinate S-adenosyl-L-methionine.

This sequence belongs to the RNA methyltransferase RlmH family. Homodimer.

Its subcellular location is the cytoplasm. The enzyme catalyses pseudouridine(1915) in 23S rRNA + S-adenosyl-L-methionine = N(3)-methylpseudouridine(1915) in 23S rRNA + S-adenosyl-L-homocysteine + H(+). Functionally, specifically methylates the pseudouridine at position 1915 (m3Psi1915) in 23S rRNA. The sequence is that of Ribosomal RNA large subunit methyltransferase H from Rhodopseudomonas palustris (strain BisB18).